The chain runs to 308 residues: Cell division protein FtsX (308 aa).

At 1–24 (MISRFFRHLFEALKSLKRNGWMTV) the chain is on the extracellular side. The chain crosses the membrane as a helical span at residues 25–45 (AAVSSVMITLTLVAIFASVIF). Over 46-178 (NTAKLATDIE…NTERLFKLAS (133 aa)) the chain is Cytoplasmic. Residues 179–199 (FIRVWGLGIAALLIFIAAFLI) form a helical membrane-spanning segment. Over 200-236 (SNTIRITIISRSREIQIMRLVGAKNSYIRGPFLLEGA) the chain is Extracellular. The helical transmembrane segment at 237–257 (FIGLLGAIAPSVLVFIVYQIV) threads the bilayer. The Cytoplasmic portion of the chain corresponds to 258-276 (YQSVNKSLVGQNLSMISPD). The helical transmembrane segment at 277-297 (LFSPLMIALLFVIGVFIGSLG) threads the bilayer. Topologically, residues 298 to 308 (SGISMRRFLKI) are extracellular.

Belongs to the ABC-4 integral membrane protein family. FtsX subfamily. As to quaternary structure, interacts with FtsE. Interacts (via large extracellular loop) with PcsB (via N-terminal coiled coil domain). This interaction directs PcsB to equatorial and septal sites of dividing cells.

The protein localises to the cell membrane. Part of the ABC transporter FtsEX involved in asymmetric cellular division facilitating the initiation of sporulation. Required in maintaining normal growth and cellular morphology. This Streptococcus pneumoniae (strain ATCC BAA-255 / R6) protein is Cell division protein FtsX.